The sequence spans 1693 residues: 1-phosphatidylinositol 4,5-bisphosphate phosphodiesterase eta-1 (1693 aa).

Residues 20 to 128 form the PH domain; that stretch reads SVMQSGTQMI…WITGLKYLMA (109 aa). 3 EF-hand domains span residues 142–177, 178–214, and 226–246; these read THDQ…LNVN, LPRR…MSLR, and DKKD…EQKM. Residues aspartate 155, asparagine 157, aspartate 159, and glutamate 166 each contribute to the Ca(2+) site. The PI-PLC X-box domain maps to 299–444; it reads QDMDQPLCNY…LKGKILVKGK (146 aa). Residue histidine 314 is part of the active site. Residues asparagine 315, glutamate 344, and aspartate 346 each coordinate Ca(2+). Histidine 358 is a catalytic residue. Glutamate 393 lines the Ca(2+) pocket. Residues lysine 442 and lysine 444 each contribute to the substrate site. The interval 526-585 is disordered; sequence LNAHLKQSPDVKESGKKSHGRSLMTNFGKHKKTTKSRSKSYSTDDEEDTQQSTGKEGGQL. The span at 532 to 541 shows a compositional bias: basic and acidic residues; the sequence is QSPDVKESGK. Over residues 553–563 the composition is skewed to basic residues; it reads GKHKKTTKSRS. The PI-PLC Y-box domain occupies 601–714; that stretch reads LSDLVVYTNS…GYVLKPQQMC (114 aa). Positions 627 and 654 each coordinate substrate. Residues 715–843 form the C2 domain; sequence KGTFNPFSGD…PGYRHVYLEG (129 aa). Ca(2+)-binding residues include isoleucine 758, aspartate 760, aspartate 784, aspartate 813, histidine 814, and aspartate 815. Residues 992-1005 show a composition bias toward basic and acidic residues; that stretch reads IEGKENSLAEDKDG. 4 disordered regions span residues 992–1014, 1052–1089, 1300–1329, and 1578–1613; these read IEGK…ASIK, TGEQ…PKQH, LESN…ETLK, and LSSR…GAGV. Polar residues predominate over residues 1065–1086; the sequence is RTTSNATSNCQENPCPSKSLSP. Positions 1592–1601 are enriched in basic and acidic residues; it reads RAKEKQEANK.

Ca(2+) is required as a cofactor. Expressed in brain and to a lower extent in lung. In brain, it is found in cerebrum, cerebellum and spinal cord. In embryo expressed in the notochord, developing spinal cord (in a ventral to dorsal gradient), dorsal root ganglia, cerebellum and dermatomyosome.

It is found in the cytoplasm. The protein localises to the membrane. The enzyme catalyses a 1,2-diacyl-sn-glycero-3-phospho-(1D-myo-inositol-4,5-bisphosphate) + H2O = 1D-myo-inositol 1,4,5-trisphosphate + a 1,2-diacyl-sn-glycerol + H(+). Functionally, the production of the second messenger molecules diacylglycerol (DAG) and inositol 1,4,5-trisphosphate (IP3) is mediated by calcium-activated phosphatidylinositol-specific phospholipase C enzymes. The protein is 1-phosphatidylinositol 4,5-bisphosphate phosphodiesterase eta-1 of Homo sapiens (Human).